The sequence spans 648 residues: Replication restart protein PriA (648 aa).

Positions 131 to 297 (TILNESNKPT…EIGKYQLVTL (167 aa)) constitute a Helicase ATP-binding domain. 144-151 (GVTGSGKT) is an ATP binding site. The DEAH box signature appears at 240–243 (DEEH). The Zn(2+) site is built by C358, C361, C367, C370, C385, C388, C398, and C401. One can recognise a Helicase C-terminal domain in the interval 393–548 (KIFSSCPECL…SFFANELEIR (156 aa)).

This sequence belongs to the helicase family. PriA subfamily. In terms of assembly, component of the replication restart primosome. Requires Zn(2+) as cofactor.

It catalyses the reaction Couples ATP hydrolysis with the unwinding of duplex DNA by translocating in the 3'-5' direction.. The catalysed reaction is ATP + H2O = ADP + phosphate + H(+). Its function is as follows. Initiates the restart of stalled replication forks, which reloads the replicative helicase on sites other than the origin of replication. Recognizes and binds to abandoned replication forks and remodels them to uncover a helicase loading site. Promotes assembly of the primosome at these replication forks. In Rickettsia conorii (strain ATCC VR-613 / Malish 7), this protein is Replication restart protein PriA.